A 334-amino-acid chain; its full sequence is Ornithine carbamoyltransferase (334 aa).

Residues 56–59 (STRT), Gln83, Arg107, and 134–137 (HPTQ) each bind carbamoyl phosphate. Residues Asn168, Asp232, and 236–237 (SM) each bind L-ornithine. Carbamoyl phosphate contacts are provided by residues 274–275 (CL) and Arg320.

The protein belongs to the aspartate/ornithine carbamoyltransferase superfamily. OTCase family.

Its subcellular location is the cytoplasm. The catalysed reaction is carbamoyl phosphate + L-ornithine = L-citrulline + phosphate + H(+). The protein operates within amino-acid biosynthesis; L-arginine biosynthesis; L-arginine from L-ornithine and carbamoyl phosphate: step 1/3. In terms of biological role, reversibly catalyzes the transfer of the carbamoyl group from carbamoyl phosphate (CP) to the N(epsilon) atom of ornithine (ORN) to produce L-citrulline. This is Ornithine carbamoyltransferase from Shigella dysenteriae serotype 1 (strain Sd197).